A 226-amino-acid polypeptide reads, in one-letter code: Exosome complex component rrp46 (226 aa).

The disordered stretch occupies residues 205–226 (NESDGHENEKNPKEDVEMDVVA). Over residues 207–219 (SDGHENEKNPKED) the composition is skewed to basic and acidic residues.

The protein belongs to the RNase PH family. As to quaternary structure, component of the RNA exosome complex. Specifically part of the catalytically inactive RNA exosome core complex (Exo-9) which may associate with the catalytic subunits rrp6 and dis3 in cytoplasmic- and nuclear-specific RNA exosome complex forms. Exo-9 is formed by a hexameric base ring of RNase PH domain-containing subunits and a cap ring consisting of csl4, rrp4 and rrp40.

It is found in the cytoplasm. It localises to the nucleus. Its subcellular location is the nucleolus. In terms of biological role, non-catalytic component of the RNA exosome complex which has 3'-&gt;5' exoribonuclease activity and participates in a multitude of cellular RNA processing and degradation events. In the nucleus, the RNA exosome complex is involved in proper maturation of stable RNA species such as rRNA, snRNA and snoRNA, in the elimination of RNA processing by-products and non-coding 'pervasive' transcripts, such as antisense RNA species and cryptic unstable transcripts (CUTs), and of mRNAs with processing defects, thereby limiting or excluding their export to the cytoplasm. In the cytoplasm, the RNA exosome complex is involved in general mRNA turnover and in RNA surveillance pathways, preventing translation of aberrant mRNAs. The catalytic inactive RNA exosome core complex of 9 subunits (Exo-9) is proposed to play a pivotal role in the binding and presentation of RNA for ribonucleolysis, and to serve as a scaffold for the association with catalytic subunits and accessory proteins or complexes. ski6 is part of the hexameric ring of RNase PH domain-containing subunits proposed to form a central channel which threads RNA substrates for degradation. The protein is Exosome complex component rrp46 (rrp46) of Schizosaccharomyces pombe (strain 972 / ATCC 24843) (Fission yeast).